We begin with the raw amino-acid sequence, 183 residues long: Beta-defensin 129 (183 aa).

Positions 1–19 are cleaved as a signal peptide; sequence MKLLFPIFASLMLQYQVNT. 3 disulfide bridges follow: Cys27-Cys53, Cys34-Cys48, and Cys38-Cys54. A disordered region spans residues 141–183; the sequence is TATSTKSNTKESRDSATASSPPAPPPPNILPTPSLELEEAEEQ. Residues 161-170 show a composition bias toward pro residues; it reads PPAPPPPNIL.

It belongs to the beta-defensin family.

The protein localises to the secreted. In terms of biological role, has antibacterial activity. This chain is Beta-defensin 129 (DEFB129), found in Gorilla gorilla gorilla (Western lowland gorilla).